Consider the following 187-residue polypeptide: Protein GrpE (187 aa).

Positions 1-11 (MTDSSNEHETE) are enriched in basic and acidic residues. The interval 1–21 (MTDSSNEHETENPSLPIPDNE) is disordered.

It belongs to the GrpE family. In terms of assembly, homodimer.

The protein resides in the cytoplasm. Participates actively in the response to hyperosmotic and heat shock by preventing the aggregation of stress-denatured proteins, in association with DnaK and GrpE. It is the nucleotide exchange factor for DnaK and may function as a thermosensor. Unfolded proteins bind initially to DnaJ; upon interaction with the DnaJ-bound protein, DnaK hydrolyzes its bound ATP, resulting in the formation of a stable complex. GrpE releases ADP from DnaK; ATP binding to DnaK triggers the release of the substrate protein, thus completing the reaction cycle. Several rounds of ATP-dependent interactions between DnaJ, DnaK and GrpE are required for fully efficient folding. In Chlamydia caviae (strain ATCC VR-813 / DSM 19441 / 03DC25 / GPIC) (Chlamydophila caviae), this protein is Protein GrpE.